Here is a 990-residue protein sequence, read N- to C-terminus: Protein argonaute 7 (990 aa).

Over residues 1-13 the composition is skewed to basic residues; sequence MEEKTHHHHHSTN. Residues 1 to 25 are disordered; it reads MEEKTHHHHHSTNKHIPSSKSRTPL. Positions 379–484 constitute a PAZ domain; the sequence is EFLTDLPRNK…LPMELCMICE (106 aa). Residues 649–950 form the Piwi domain; that stretch reads LIICVMEKKH…AAYRGRLYIE (302 aa). Residues 953–973 are disordered; sequence SESNGGSMNPSSVSRVGPPKT. Polar residues predominate over residues 954–966; sequence ESNGGSMNPSSVS.

Belongs to the argonaute family. Ago subfamily. As to expression, expressed in leaves and floral buds, and at low levels in roots.

In terms of biological role, involved in RNA-mediated post-transcriptional gene silencing (PTGS). Main component of the RNA-induced silencing complex (RISC) that binds to a short guide RNA such as a microRNA (miRNA) or small interfering RNA (siRNA). RISC uses the mature miRNA or siRNA as a guide for slicer-directed cleavage of homologous mRNAs to repress gene expression. Required for the processing of 21 nucleotide trans-acting siRNAs (ta-siRNAs) derived from TAS3a transcripts. Associates preferentially with the microRNA (miRNA) miR390 which guides the cleavage of TAS3 precursor RNA. Seems to act as miR390 specific slicer. Associates mainly with small RNAs of 21 nucleotide in length and with a 5' terminal adenosine. Acts in the RDR6/SGS3/DCL4/AGO7 trans-acting siRNA pathway involved in leaf developmental timing. Does not seem to act on leaf polarity. Required for the production of the 30-40nt bacterial-induced long siRNAs (lsiRNA). Involved in antiviral RNA silencing by contributing to efficient viral RNAs clearance. Targets less structured viral RNAs than AGO1 which is capable of targeting RNAs with more compact structures. This chain is Protein argonaute 7 (AGO7), found in Arabidopsis thaliana (Mouse-ear cress).